A 447-amino-acid polypeptide reads, in one-letter code: Phosphoglucosamine mutase (447 aa).

The active-site Phosphoserine intermediate is Ser104. Residues Ser104, Asp243, Asp245, and Asp247 each contribute to the Mg(2+) site. Phosphoserine is present on Ser104.

Belongs to the phosphohexose mutase family. The cofactor is Mg(2+). Activated by phosphorylation.

The catalysed reaction is alpha-D-glucosamine 1-phosphate = D-glucosamine 6-phosphate. Catalyzes the conversion of glucosamine-6-phosphate to glucosamine-1-phosphate. The chain is Phosphoglucosamine mutase from Corynebacterium jeikeium (strain K411).